We begin with the raw amino-acid sequence, 335 residues long: Ornithine carbamoyltransferase (335 aa).

Residues 56–59 (STRT), glutamine 83, arginine 107, and 134–137 (HPTQ) contribute to the carbamoyl phosphate site. L-ornithine-binding positions include asparagine 168, aspartate 232, and 236 to 237 (SM). Carbamoyl phosphate is bound by residues 274-275 (CL) and arginine 320.

It belongs to the aspartate/ornithine carbamoyltransferase superfamily. OTCase family.

It localises to the cytoplasm. It catalyses the reaction carbamoyl phosphate + L-ornithine = L-citrulline + phosphate + H(+). It participates in amino-acid biosynthesis; L-arginine biosynthesis; L-arginine from L-ornithine and carbamoyl phosphate: step 1/3. Reversibly catalyzes the transfer of the carbamoyl group from carbamoyl phosphate (CP) to the N(epsilon) atom of ornithine (ORN) to produce L-citrulline. The sequence is that of Ornithine carbamoyltransferase from Pectobacterium atrosepticum (strain SCRI 1043 / ATCC BAA-672) (Erwinia carotovora subsp. atroseptica).